We begin with the raw amino-acid sequence, 167 residues long: Urease accessory protein UreE (167 aa).

The protein belongs to the UreE family.

It localises to the cytoplasm. Its function is as follows. Involved in urease metallocenter assembly. Binds nickel. Probably functions as a nickel donor during metallocenter assembly. This Pseudomonas aeruginosa (strain LESB58) protein is Urease accessory protein UreE.